A 251-amino-acid chain; its full sequence is Flap endonuclease Xni (251 aa).

D104 serves as a coordination point for Mg(2+). Residues 160–249 (VQPQQLPDYW…IDGNLQQLRL (90 aa)) form the 5'-3' exonuclease domain. Positions 171, 172, 180, 182, and 185 each coordinate K(+). The interaction with DNA stretch occupies residues 184–189 (GIGPKS).

Belongs to the Xni family. Requires Mg(2+) as cofactor. K(+) is required as a cofactor.

Its function is as follows. Has flap endonuclease activity. During DNA replication, flap endonucleases cleave the 5'-overhanging flap structure that is generated by displacement synthesis when DNA polymerase encounters the 5'-end of a downstream Okazaki fragment. The sequence is that of Flap endonuclease Xni from Escherichia coli O81 (strain ED1a).